Here is a 287-residue protein sequence, read N- to C-terminus: Prepilin leader peptidase/N-methyltransferase (287 aa).

Helical transmembrane passes span 10–30 (LGFP…NVVI), 101–121 (ISIQ…ASVW), 125–145 (FGWQ…MSGI), 177–197 (KPAL…WWLF), 226–246 (ILPI…IWLF), and 253–273 (ATPI…FFWG).

The protein belongs to the peptidase A24 family.

The protein localises to the cell inner membrane. The enzyme catalyses Typically cleaves a -Gly-|-Phe- bond to release an N-terminal, basic peptide of 5-8 residues from type IV prepilin, and then N-methylates the new N-terminal amino group, the methyl donor being S-adenosyl-L-methionine.. Plays an essential role in type IV pili and type II pseudopili formation by proteolytically removing the leader sequence from substrate proteins and subsequently monomethylating the alpha-amino group of the newly exposed N-terminal phenylalanine. This Xanthomonas campestris pv. campestris (strain ATCC 33913 / DSM 3586 / NCPPB 528 / LMG 568 / P 25) protein is Prepilin leader peptidase/N-methyltransferase (xpsO).